The chain runs to 206 residues: uncharacterized protein (206 aa).

A signal peptide spans 1–22 (MPKLRLIGLTLLALSATAVSHA). Residues 23-89 (EETRYVSDEL…IPLKQLSTEP (67 aa)) enclose the SH3b domain. The helical transmembrane segment at 169 to 191 (IIMQWFMYGGGVLGLGLLLGLVL) threads the bilayer.

To H.influenzae HI_1605.

It localises to the membrane. This is an uncharacterized protein from Escherichia coli O157:H7.